Consider the following 465-residue polypeptide: Myosin-6 (465 aa).

Residues 1 to 35 (ILERGDALLVVQWNIRAFTGVKKWPWMELYFEIEP) enclose the Myosin motor domain. The stretch at 36–465 (LLKSAEAEKE…YRRKLEEAQR (430 aa)) forms a coiled coil. A phosphoserine mark is found at serine 285 and serine 334. Position 456 is a phosphotyrosine (tyrosine 456).

Muscle myosin is a hexameric protein that consists of 2 heavy chain subunits (MHC), 2 alkali light chain subunits (MLC) and 2 regulatory light chain subunits (MLC-2).

Its subcellular location is the cytoplasm. It is found in the myofibril. Its function is as follows. Muscle contraction. The polypeptide is Myosin-6 (MYH6) (Oryctolagus cuniculus (Rabbit)).